Consider the following 459-residue polypeptide: MFS-type transporter SLC18B1 (459 aa).

An N-acetylmethionine modification is found at M1. Low complexity predominate over residues 1 to 10; that stretch reads MDEAGSPAPA. Positions 1-27 are disordered; it reads MDEAGSPAPAGTGGGDDPGGSTRETSR. Residues 1-33 are Cytoplasmic-facing; the sequence is MDEAGSPAPAGTGGGDDPGGSTRETSRRLSREQ. S21 carries the phosphoserine modification. A helical membrane pass occupies residues 34–54; it reads IFVLVSAASMNLGCMMTYSIL. The Extracellular segment spans residues 55 to 70; it reads GPFFPKEAEKKGASNT. The chain crosses the membrane as a helical span at residues 71–91; sequence MIGMIFGCYALFELLASLVFG. Topologically, residues 92–100 are cytoplasmic; it reads KYLVHIGAK. Residues 101–121 form a helical membrane-spanning segment; that stretch reads FMFIAGMFVSGGVTILFGVLD. The Extracellular segment spans residues 122–127; the sequence is QLPEGP. The helical transmembrane segment at 128 to 148 threads the bilayer; that stretch reads IFIAMCFLVRIVDAIGFGAAI. At 149-167 the chain is on the cytoplasmic side; sequence TASSSILAKAFPNNVATVM. Residues 168–188 traverse the membrane as a helical segment; the sequence is GSLEVFSGLGLVAGPPLGGLL. At 189-195 the chain is on the extracellular side; the sequence is YQSFGYE. The chain crosses the membrane as a helical span at residues 196–216; the sequence is VPFIFLGCIVLLMIPLNLYIL. The Cytoplasmic segment spans residues 217–235; sequence PSYAQESDPGKQSFWKLVT. A helical transmembrane segment spans residues 236–256; the sequence is LPKMGLLAFVIISLSSCFGFL. The Extracellular segment spans residues 257–274; the sequence is DPTLSLFVMEKFSLSTGY. Residues 275 to 295 form a helical membrane-spanning segment; that stretch reads VGLVFLGLSLSYAISSPLFGL. At 296–306 the chain is on the cytoplasmic side; sequence LSDKMPTLRKW. A helical transmembrane segment spans residues 307–327; it reads LLVFGNLITAGCYMLLGPVPL. The Extracellular portion of the chain corresponds to 328–333; the sequence is LHIKSQ. Residues 334 to 354 traverse the membrane as a helical segment; sequence LWLLVLVLVVNGISAGMSIIP. The Cytoplasmic portion of the chain corresponds to 355–379; the sequence is TFPEMLSCAYANGFEDSISTLGLVS. Residues 380–400 traverse the membrane as a helical segment; it reads GLFGAMWSVGAFMGPILGGFL. At 401-409 the chain is on the extracellular side; it reads CEKIGFEWA. The chain crosses the membrane as a helical span at residues 410–430; that stretch reads AAMQGLWTLLSGVSMALFYLW. Over 431–459 the chain is Cytoplasmic; the sequence is EDSTARRRSKAQNSLGTEEERAALLPNDT. Residues 440-459 form a disordered region; it reads KAQNSLGTEEERAALLPNDT.

This sequence belongs to the major facilitator superfamily. Widely expressed, with highest expression in the lung, pancreas and kidney. High expression in the CNS, particularly in the hypothalamus, the thalamus and the cerebellum. In the forebrain, abundantly expressed in the telencephalon, especially in the cerebral cortex layers, except layer 1, as well as in the induseum griseum, the piriform area, the taenia tecta, dorsal part and in the entorhinal area, lateral part. Lower levels in the bed anterior olfactory nucleus, posteroventral part and in layer two of the olfactory tubercle. In the amygdala, high levels observed in the intercalated nucleus and the medial nucleus. In the diencephalon, expressed in the nuclei in both the hypothalamus and thalamus. Among the hypothalamic areas, strongest expression in the arcuate nucleus and in the ventromedial nucleus, as well as in the suprachiasmatic nucleus, anterior nucleus, especially in its central part, and in the magnocellular division of the paraventricular nucleus. In the thalamus, highest levels in the medial habenula. Expression also observed in the paraventricular thalamic nucleus, parataenial nucleus, central medial nucleus, intermediodorsal nucleus and lateral dorsal nucleus. In the hindbrain, detected in the cerebellum and in the pons. In the midbrain and the medulla, expression levels were modest. In the midbrain, highest expression in the periaqueductal gray and all subdivisions of the interpeduncular nucleus, except for the caudal part. In the pons, the strongest labeling was seen in the nucleus incertus and in the tegmental nucleus. Expressed in bone marrow-derived mast cells (at protein level).

The protein localises to the cytoplasmic vesicle. It is found in the secretory vesicle membrane. Its subcellular location is the secretory vesicle. It localises to the synaptic vesicle membrane. It catalyses the reaction spermine(in) + n H(+)(out) = spermine(out) + n H(+)(in). The enzyme catalyses spermidine(in) + n H(+)(out) = spermidine(out) + n H(+)(in). It carries out the reaction serotonin(in) + n H(+)(out) = serotonin(out) + n H(+)(in). Its function is as follows. Proton-coupled polyamine antiporter involved in the translocation of polyamines from cytosol into secretory vesicles prior to their release via exocytosis. Uses the electrochemical proton gradient generated by a V-type proton-pumping ATPase to couple the efflux of protons with the uptake of a polyamine molecule. Facilitates vesicular storage of spermine and spermidine in astrocytes with an impact on glutamatergic neuronal transmission and memory formation. Upon antigen stimulation, regulates polyamine accumulation and release in mast cell secretory granules, which in turn potentiates mast cell degranulation and histamine secretion. In Mus musculus (Mouse), this protein is MFS-type transporter SLC18B1.